A 258-amino-acid chain; its full sequence is Acyl-[acyl-carrier-protein]--UDP-N-acetylglucosamine O-acyltransferase (258 aa).

It belongs to the transferase hexapeptide repeat family. LpxA subfamily. Homotrimer.

It localises to the cytoplasm. The enzyme catalyses a (3R)-hydroxyacyl-[ACP] + UDP-N-acetyl-alpha-D-glucosamine = a UDP-3-O-[(3R)-3-hydroxyacyl]-N-acetyl-alpha-D-glucosamine + holo-[ACP]. It participates in glycolipid biosynthesis; lipid IV(A) biosynthesis; lipid IV(A) from (3R)-3-hydroxytetradecanoyl-[acyl-carrier-protein] and UDP-N-acetyl-alpha-D-glucosamine: step 1/6. In terms of biological role, involved in the biosynthesis of lipid A, a phosphorylated glycolipid that anchors the lipopolysaccharide to the outer membrane of the cell. The polypeptide is Acyl-[acyl-carrier-protein]--UDP-N-acetylglucosamine O-acyltransferase (Pseudomonas entomophila (strain L48)).